The following is a 284-amino-acid chain: Small ribosomal subunit protein uS2 (284 aa).

Residues 250 to 272 show a composition bias toward low complexity; sequence QELLAGATASPTAAGAAPGTPEA. The tract at residues 250–284 is disordered; that stretch reads QELLAGATASPTAAGAAPGTPEADIQTEPTAPQNP.

It belongs to the universal ribosomal protein uS2 family.

This is Small ribosomal subunit protein uS2 from Mycobacterium sp. (strain KMS).